Here is a 907-residue protein sequence, read N- to C-terminus: MPTAAAPIISSVQKLVLYETRARYFLVGSNNAETKYRVLKIDRTEPKDLVIIDDRHVYTQQEVRELLGRLDLGNRTKMGQKGSSGLFRAVSAFGVVGFVRFLEGYYIVLITKRRKMADIGGHAIYKVEDTNMIYIPNDSVRVTHPDEARYLRIFQNVDLSSNFYFSYSYDLSHSLQYNLTVLRMPLEMLKSEMTQNRQESFDIFEDEGLITQGGSGVFGICSEPYMKYVWNGELLDIIKSTVHRDWLLYIIHGFCGQSKLLIYGRPVYVTLIARRSSKFAGTRFLKRGANCEGDVANEVETEQILCDASVMSFTAGSYSSYVQVRGSVPLYWSQDISTMMPKPPITLDQADPFAHVAALHFDQMFQRFGSPIIILNLVKEREKRKHERILSEELVAAVTYLNQFLPPEHTIVYIPWDMAKYTKSKLCNVLDRLNVIAESVVKKTGFFVNRPDSYCSILRPDEKWNELGGCVIPTGRLQTGILRTNCVDCLDRTNTAQFMVGKCALAYQLYSLGLIDKPNLQFDTDAVRLFEELYEDHGDTLSLQYGGSQLVHRVKTYRKIAPWTQHSKDIMQTLSRYYSNAFSDADRQDSINLFLGVFHPTEGKPHLWELPTDFYLHHKNTMRLLPTRRSYTYWWTPEVIKHLPLPYDEVICAVNLKKLIVKKFHKYEEEIDIHNEFFRPYELSSFDDTFCLAMTSSARDFMPKTVGIDPSPFTVRKPDETGKSVLGNKSNREEAVLQRKTAASAPPPPSEEAVSSSSEDDSGTDREEEGSVSQRSTPVKMTDAGDSAKVTENVVQPMKELYGINLSDGLSEEDFSIYSRFVQLGQSQHKQDKNSQQPCSRCSDGVIKLTPISAFSQDNIYEVQPPRVDRKSTEIFQAHIQASQGIMQPLGKEDSSMYREYIRNRYL.

Residues 154-547 enclose the SAC domain; the sequence is FQNVDLSSNF…GDTLSLQYGG (394 aa). Residues 707–788 are disordered; the sequence is GIDPSPFTVR…VKMTDAGDSA (82 aa). Acidic residues predominate over residues 758–770; that stretch reads SEDDSGTDREEEG.

As to quaternary structure, component of the PI(3,5)P2 regulatory complex/PAS complex, at least composed of PIKFYVE, FIG4 and VAC14. VAC14 nucleates the assembly of the complex and serves as a scaffold by pentamerizing into a star-shaped structure, which can bind a single copy each of PIKFYVE and FIG4 and coordinates their activities.

The protein localises to the endosome membrane. It catalyses the reaction a 1,2-diacyl-sn-glycero-3-phospho-(1D-myo-inositol-3,5-bisphosphate) + H2O = a 1,2-diacyl-sn-glycero-3-phospho-(1D-myo-inositol-3-phosphate) + phosphate. It carries out the reaction a 1,2-diacyl-sn-glycero-3-phospho-(1D-myo-inositol-4,5-bisphosphate) + H2O = a 1,2-diacyl-sn-glycero-3-phospho-(1D-myo-inositol 4-phosphate) + phosphate. The enzyme catalyses a 1,2-diacyl-sn-glycero-3-phospho-(1D-myo-inositol-3,4,5-trisphosphate) + H2O = a 1,2-diacyl-sn-glycero-3-phospho-(1D-myo-inositol-3,4-bisphosphate) + phosphate. The catalysed reaction is O-phospho-L-seryl-[protein] + H2O = L-seryl-[protein] + phosphate. In terms of biological role, dual specificity phosphatase component of the PI(3,5)P2 regulatory complex which regulates both the synthesis and turnover of phosphatidylinositol 3,5-bisphosphate (PtdIns(3,5)P2). Catalyzes the dephosphorylation of phosphatidylinositol 3,5-bisphosphate (PtdIns(3,5)P2) to form phosphatidylinositol 3-phosphate. Has serine-protein phosphatase activity acting on PIKfyve to stimulate its lipid kinase activity, its catalytically activity being required for maximal PI(3,5)P2 production. In vitro, hydrolyzes all three D5-phosphorylated polyphosphoinositide and although displaying preferences for PtdIns(3,5)P2, it is capable of hydrolyzing PtdIns(3,4,5)P3 and PtdIns(4,5)P2, at least in vitro. This chain is Polyphosphoinositide phosphatase, found in Homo sapiens (Human).